A 1006-amino-acid chain; its full sequence is Probable beta-galactosidase A (1006 aa).

A signal peptide spans 1–18 (MKLLSVCAIALLAAQAAG). Residues Y96, N140, A141, and E142 each coordinate substrate. An N-linked (GlcNAc...) asparagine glycan is attached at N156. Position 199 (N199) interacts with substrate. Catalysis depends on E200, which acts as the Proton donor. C205 and C206 are oxidised to a cystine. Y260 contacts substrate. A disulfide bond links C266 and C315. The Nucleophile role is filled by E298. Y364 provides a ligand contact to substrate. 7 N-linked (GlcNAc...) asparagine glycosylation sites follow: N373, N402, N422, N622, N760, N777, and N914.

The protein belongs to the glycosyl hydrolase 35 family.

It is found in the secreted. It catalyses the reaction Hydrolysis of terminal non-reducing beta-D-galactose residues in beta-D-galactosides.. Functionally, cleaves beta-linked terminal galactosyl residues from gangliosides, glycoproteins, and glycosaminoglycans. The protein is Probable beta-galactosidase A (lacA) of Aspergillus fumigatus (strain ATCC MYA-4609 / CBS 101355 / FGSC A1100 / Af293) (Neosartorya fumigata).